The chain runs to 302 residues: MHVSLRQLRVFEAVARHNSYTRAAEELHLSQPAVSMQVRQLEDEIGLSLFERLGKQVVLTEAGREVFHYSRAIGQSLREMEEVLESLKGVSRGSLRIAVASTVNYFAPRLMAIFQQRHSGIGLRLDVTNRESLVQMLDSNSVDLVLMGVPPRNVEVEAEAFMDNPLVVIAPPDHPLAGERAISLARLAEETFVMREEGSGTRQAMERFFSERGQTIRHGMQMTRNEAVKQAVRSGLGLSVVSLHTIELELETRRLVTLDVEGFPDRRQWYLVYRRGKRLSPAAGAFREFVLSEAARMHCRLG.

Residues methionine 1–threonine 60 form the HTH lysR-type domain. A DNA-binding region (H-T-H motif) is located at residues tyrosine 20 to arginine 39.

It belongs to the LysR transcriptional regulatory family.

Its function is as follows. Trans-acting transcriptional regulator of RuBisCO genes (rbcAB) expression. This is RuBisCO operon transcriptional regulator (rbcR) from Allochromatium vinosum (Chromatium vinosum).